We begin with the raw amino-acid sequence, 656 residues long: Chromosomal replication initiator protein DnaA (656 aa).

The tract at residues 1–100 (MADVPADLAA…TAGEPAGPAP (100 aa)) is domain I, interacts with DnaA modulators. A disordered region spans residues 91-313 (TAGEPAGPAP…PAPATGPGEP (223 aa)). Pro residues predominate over residues 97-109 (GPAPQAPQSPPSR). A domain II region spans residues 101 to 315 (QAPQSPPSRP…PATGPGEPTA (215 aa)). Composition is skewed to basic and acidic residues over residues 126-144 (GREEYRDRDEYEGYGRNRA) and 231-273 (QRGD…RDLP). Residues 291-313 (GPATGAPGPLAAQPAPATGPGEP) show a composition bias toward low complexity. The domain III, AAA+ region stretch occupies residues 316–532 (RLNPKYLFDT…GALIRVTAFA (217 aa)). The ATP site is built by glycine 360, glycine 362, lysine 363, and threonine 364. The segment at 533–656 (SLNRQPVDLG…TELTNRIKNG (124 aa)) is domain IV, binds dsDNA.

Belongs to the DnaA family. As to quaternary structure, oligomerizes as a right-handed, spiral filament on DNA at oriC.

The protein localises to the cytoplasm. Functionally, plays an essential role in the initiation and regulation of chromosomal replication. ATP-DnaA binds to the origin of replication (oriC) to initiate formation of the DNA replication initiation complex once per cell cycle. Binds the DnaA box (a 9 base pair repeat at the origin) and separates the double-stranded (ds)DNA. Forms a right-handed helical filament on oriC DNA; dsDNA binds to the exterior of the filament while single-stranded (ss)DNA is stabiized in the filament's interior. The ATP-DnaA-oriC complex binds and stabilizes one strand of the AT-rich DNA unwinding element (DUE), permitting loading of DNA polymerase. After initiation quickly degrades to an ADP-DnaA complex that is not apt for DNA replication. Binds acidic phospholipids. The polypeptide is Chromosomal replication initiator protein DnaA (Streptomyces coelicolor (strain ATCC BAA-471 / A3(2) / M145)).